Reading from the N-terminus, the 396-residue chain is MLDNHTIAIVKSTIPLLAETGPKLTAHFYDRMFTHNPELKDIFNMSNQRNGDQREALFNAICAYATNIENLAALLPAVERIAQKHTSFNIQADQYQIVGNHLLATLDEMFSPGQEVLDAWGKAYGVLANVFIQREDDIYRSTETKTGGWSGVRPFRIVNKQLQSSVITSFTLEPTDGQPIADFQPGQYLAIYIKHDSFANQEIRQYSLTHAPNGKSYRIAVKREAQGTVSGYLHDTAREGDIVHLAAPHGDFFLDIPTDTPVALISGGVGQTPMLGMLHTLKQQDHQAKVLWLHAAENGTAHAFTDEIEQTGQALPHFDHHIWYREPQQTDRPGEDYHHSGLMQLASLKGELTTPDMHYYLCGPVVFMQFVAQQLLAMGIPAEQLHYECFGPHKVV.

The region spanning 1–136 (MLDNHTIAIV…LANVFIQRED (136 aa)) is the Globin domain. Histidine 85 contributes to the heme b binding site. Residues tyrosine 95 and glutamate 135 each act as charge relay system in the active site. Positions 147–396 (GGWSGVRPFR…YECFGPHKVV (250 aa)) are reductase. An FAD-binding FR-type domain is found at 150–255 (SGVRPFRIVN…AAPHGDFFLD (106 aa)). FAD-binding positions include tyrosine 188 and 204-207 (RQYS). Position 268 to 273 (268 to 273 (GVGQTP)) interacts with NADP(+). 389–392 (CFGP) is an FAD binding site.

The protein belongs to the globin family. Two-domain flavohemoproteins subfamily. It in the C-terminal section; belongs to the flavoprotein pyridine nucleotide cytochrome reductase family. The cofactor is heme b. It depends on FAD as a cofactor.

It catalyses the reaction 2 nitric oxide + NADPH + 2 O2 = 2 nitrate + NADP(+) + H(+). The enzyme catalyses 2 nitric oxide + NADH + 2 O2 = 2 nitrate + NAD(+) + H(+). Functionally, is involved in NO detoxification in an aerobic process, termed nitric oxide dioxygenase (NOD) reaction that utilizes O(2) and NAD(P)H to convert NO to nitrate, which protects the bacterium from various noxious nitrogen compounds. Therefore, plays a central role in the inducible response to nitrosative stress. The protein is Flavohemoprotein of Pectobacterium atrosepticum (strain SCRI 1043 / ATCC BAA-672) (Erwinia carotovora subsp. atroseptica).